Reading from the N-terminus, the 479-residue chain is Ribosomal RNA small subunit methyltransferase F (479 aa).

S-adenosyl-L-methionine contacts are provided by residues Ala-125–Lys-131, Glu-149, Asp-176, and Asp-194. Cys-247 (nucleophile) is an active-site residue.

The protein belongs to the class I-like SAM-binding methyltransferase superfamily. RsmB/NOP family.

Its subcellular location is the cytoplasm. The catalysed reaction is cytidine(1407) in 16S rRNA + S-adenosyl-L-methionine = 5-methylcytidine(1407) in 16S rRNA + S-adenosyl-L-homocysteine + H(+). In terms of biological role, specifically methylates the cytosine at position 1407 (m5C1407) of 16S rRNA. This is Ribosomal RNA small subunit methyltransferase F from Escherichia coli (strain SE11).